The chain runs to 68 residues: Large ribosomal subunit protein uL29 (68 aa).

It belongs to the universal ribosomal protein uL29 family.

In Streptococcus sanguinis (strain SK36), this protein is Large ribosomal subunit protein uL29.